The chain runs to 84 residues: Anaphase-promoting complex subunit 11 (84 aa).

Positions 23, 26, 34, 37, 44, 51, 53, 56, 58, 59, 73, and 76 each coordinate Zn(2+). An RING-type zinc finger spans residues 34–77 (CPDCKVPGDDCPLVWGQCSHCFHMHCILKWLHAQQVQQHCPMCR).

This sequence belongs to the RING-box family. The mammalian APC/C is composed at least of 14 distinct subunits ANAPC1, ANAPC2, CDC27/APC3, ANAPC4, ANAPC5, CDC16/APC6, ANAPC7, CDC23/APC8, ANAPC10, ANAPC11, CDC26/APC12, ANAPC13, ANAPC15 and ANAPC16 that assemble into a complex of at least 19 chains with a combined molecular mass of around 1.2 MDa; APC/C interacts with FZR1 and FBXO5. Interacts with the cullin domain of ANAPC2. Interacts with UBE2D2. Post-translationally, auto-ubiquitinated. In terms of tissue distribution, expressed at high levels in skeletal muscle and heart; in moderate levels in brain, kidney, and liver; and at low levels in colon, thymus, spleen, small intestine, placenta, lung and peripheral blood leukocyte.

Its subcellular location is the cytoplasm. The protein localises to the nucleus. Its pathway is protein modification; protein ubiquitination. Functionally, together with the cullin protein ANAPC2, constitutes the catalytic component of the anaphase promoting complex/cyclosome (APC/C), a cell cycle-regulated E3 ubiquitin ligase that controls progression through mitosis and the G1 phase of the cell cycle. The APC/C complex acts by mediating ubiquitination and subsequent degradation of target proteins: it mainly mediates the formation of 'Lys-11'-linked polyubiquitin chains and, to a lower extent, the formation of 'Lys-48'- and 'Lys-63'-linked polyubiquitin chains. The APC/C complex catalyzes assembly of branched 'Lys-11'-/'Lys-48'-linked branched ubiquitin chains on target proteins. May recruit the E2 ubiquitin-conjugating enzymes to the complex. The sequence is that of Anaphase-promoting complex subunit 11 (ANAPC11) from Homo sapiens (Human).